A 320-amino-acid chain; its full sequence is Eukaryotic translation initiation factor 3 subunit G (320 aa).

The segment at 1-60 (MPTGDFDSKPSWADQVEEEGEDDKCVTSELLKGIPLPTGDTSPEPELLPGDPLPPPKEVI) is disordered. 2 positions are modified to phosphoserine: Ser-8 and Ser-11. Phosphothreonine is present on residues Thr-38 and Thr-41. Phosphoserine is present on residues Ser-42, Ser-189, Ser-223, and Ser-264. The interval 204 to 233 (QAAQSKTGKYVPPSLRDGASRRGESMQPNR) is disordered. Residues 221 to 233 (GASRRGESMQPNR) show a composition bias toward basic and acidic residues. An RRM domain is found at 239-317 (ATIRVTNLSE…LILNVEWAKP (79 aa)).

It belongs to the eIF-3 subunit G family. In terms of assembly, component of the eukaryotic translation initiation factor 3 (eIF-3) complex, which is composed of 13 subunits: EIF3A, EIF3B, EIF3C, EIF3D, EIF3E, EIF3F, EIF3G, EIF3H, EIF3I, EIF3J, EIF3K, EIF3L and EIF3M. The eIF-3 complex appears to include 3 stable modules: module A is composed of EIF3A, EIF3B, EIF3G and EIF3I; module B is composed of EIF3F, EIF3H, and EIF3M; and module C is composed of EIF3C, EIF3D, EIF3E, EIF3K and EIF3L. EIF3C of module C binds EIF3B of module A and EIF3H of module B, thereby linking the three modules. EIF3J is a labile subunit that binds to the eIF-3 complex via EIF3B. The eIF-3 complex may interact with RPS6KB1 under conditions of nutrient depletion. Mitogenic stimulation may lead to binding and activation of a complex composed of MTOR and RPTOR, leading to phosphorylation and release of RPS6KB1 and binding of EIF4B to eIF-3. Interacts (via C-terminus) with AIFM1 (via N-terminus). Interacts with DHX33; the interaction is independent of RNA. Phosphorylated. Phosphorylation is enhanced upon serum stimulation.

It localises to the cytoplasm. The protein localises to the nucleus. The protein resides in the perinuclear region. RNA-binding component of the eukaryotic translation initiation factor 3 (eIF-3) complex, which is required for several steps in the initiation of protein synthesis. The eIF-3 complex associates with the 40S ribosome and facilitates the recruitment of eIF-1, eIF-1A, eIF-2:GTP:methionyl-tRNAi and eIF-5 to form the 43S pre-initiation complex (43S PIC). The eIF-3 complex stimulates mRNA recruitment to the 43S PIC and scanning of the mRNA for AUG recognition. The eIF-3 complex is also required for disassembly and recycling of post-termination ribosomal complexes and subsequently prevents premature joining of the 40S and 60S ribosomal subunits prior to initiation. The eIF-3 complex specifically targets and initiates translation of a subset of mRNAs involved in cell proliferation, including cell cycling, differentiation and apoptosis, and uses different modes of RNA stem-loop binding to exert either translational activation or repression. This subunit can bind 18S rRNA. The chain is Eukaryotic translation initiation factor 3 subunit G (Eif3g) from Mus musculus (Mouse).